The chain runs to 333 residues: 1,5-anhydro-D-fructose reductase (333 aa).

NADP(+) contacts are provided by residues 9-12, 33-34, Arg38, 71-76, 93-94, Asn120, 162-163, and Tyr283; these read ASTI, SS, TTNELH, EK, and WR.

The protein belongs to the Gfo/Idh/MocA family. Monomer.

The catalysed reaction is 1,5-anhydro-D-mannitol + NADP(+) = 1,5-anhydro-D-fructose + NADPH + H(+). Catalyzes the NADPH-specific reduction of 1,5-anhydro-D-fructose to 1,5-anhydro-D-mannitol. The chain is 1,5-anhydro-D-fructose reductase (afr) from Rhizobium meliloti (strain 1021) (Ensifer meliloti).